The sequence spans 151 residues: Small ribosomal subunit protein uS11 (151 aa).

Positions 130–151 are disordered; sequence EDVTPIPSDSTRRKGGRRGRRL. A compositionally biased stretch (basic residues) spans 142–151; sequence RKGGRRGRRL.

Belongs to the universal ribosomal protein uS11 family.

The polypeptide is Small ribosomal subunit protein uS11 (Aedes aegypti (Yellowfever mosquito)).